Here is an 863-residue protein sequence, read N- to C-terminus: Alanine--tRNA ligase (863 aa).

4 residues coordinate Zn(2+): His552, His556, Cys654, and His658.

It belongs to the class-II aminoacyl-tRNA synthetase family. Zn(2+) is required as a cofactor.

The protein resides in the cytoplasm. The catalysed reaction is tRNA(Ala) + L-alanine + ATP = L-alanyl-tRNA(Ala) + AMP + diphosphate. Catalyzes the attachment of alanine to tRNA(Ala) in a two-step reaction: alanine is first activated by ATP to form Ala-AMP and then transferred to the acceptor end of tRNA(Ala). Also edits incorrectly charged Ser-tRNA(Ala) and Gly-tRNA(Ala) via its editing domain. The polypeptide is Alanine--tRNA ligase (Nitrosomonas europaea (strain ATCC 19718 / CIP 103999 / KCTC 2705 / NBRC 14298)).